The sequence spans 79 residues: Large ribosomal subunit protein bL31c (79 aa).

The protein belongs to the bacterial ribosomal protein bL31 family. Type A subfamily. In terms of assembly, part of the 50S ribosomal subunit.

It localises to the plastid. The protein localises to the chloroplast. Binds the 23S rRNA. The protein is Large ribosomal subunit protein bL31c of Gracilaria tenuistipitata var. liui (Red alga).